The following is an 892-amino-acid chain: Alanine--tRNA ligase (892 aa).

His596, His600, Cys700, and His704 together coordinate Zn(2+).

Belongs to the class-II aminoacyl-tRNA synthetase family. Zn(2+) is required as a cofactor.

The protein resides in the cytoplasm. It catalyses the reaction tRNA(Ala) + L-alanine + ATP = L-alanyl-tRNA(Ala) + AMP + diphosphate. Functionally, catalyzes the attachment of alanine to tRNA(Ala) in a two-step reaction: alanine is first activated by ATP to form Ala-AMP and then transferred to the acceptor end of tRNA(Ala). Also edits incorrectly charged Ser-tRNA(Ala) and Gly-tRNA(Ala) via its editing domain. The polypeptide is Alanine--tRNA ligase (Methanococcus maripaludis (strain DSM 14266 / JCM 13030 / NBRC 101832 / S2 / LL)).